Here is a 187-residue protein sequence, read N- to C-terminus: UPF0301 protein YE3428 (187 aa).

The protein belongs to the UPF0301 (AlgH) family.

The chain is UPF0301 protein YE3428 from Yersinia enterocolitica serotype O:8 / biotype 1B (strain NCTC 13174 / 8081).